The following is a 177-amino-acid chain: uncharacterized protein (177 aa).

A compositionally biased stretch (low complexity) spans 100–115 (QVQPHQQTHQQSQQTH). Positions 100–135 (QVQPHQQTHQQSQQTHNKTVANSGDPPPPPPSQPNK) are disordered. The helical transmembrane segment at 141-158 (WIVGMVIGVVVLYLLYRY) threads the bilayer.

Its subcellular location is the membrane. This is an uncharacterized protein from Aedes vexans (Inland floodwater mosquito).